The chain runs to 1164 residues: IgA FC receptor (1164 aa).

A signal peptide spans 1–37; that stretch reads MFKSNYERKMRYSIRKFSVGVASVAVASLFMGSVAHA. Disordered stretches follow at residues 54-75 and 167-220; these read KPYP…ELET and HEEV…EDKD. The segment covering 59–73 has biased composition (polar residues); it reads MAQTDQGNNSSSSEL. Basic and acidic residues-rich tracts occupy residues 167–176 and 183–220; these read HEEVEKDKKA and KQSD…EDKD. IgA-binding regions lie at residues 199–438 and 439–826; these read NHQK…KIEL and TVSP…ETNT. Residues 434-534 enclose the Ig-like domain; sequence QKIELTVSPE…VEKTFTITVQ (101 aa). Residues 536–564 are compositionally biased toward basic and acidic residues; that stretch reads KEEKQVPKTPEQKDSKTEEKVPQEPKSND. Disordered stretches follow at residues 536–567 and 823–947; these read KEEK…DKNQ and ETNT…PDGL. Over residues 911–920 the composition is skewed to pro residues; it reads PKIPEPPKTP. The LPXTG sorting signal motif lies at 1132–1136; the sequence is LPYTG. Residue Thr1135 is modified to Pentaglycyl murein peptidoglycan amidated threonine. Positions 1136-1164 are cleaved as a propeptide — removed by sortase; sequence GVASNLVLEIMGLLGLIGTSFIAMKRRKS.

It is found in the secreted. Its subcellular location is the cell wall. This is IgA FC receptor (bag) from Streptococcus agalactiae.